Here is a 379-residue protein sequence, read N- to C-terminus: Polycomb group protein FIE2 (379 aa).

WD repeat units follow at residues 85–128, 131–171, 177–217, 243–280, 292–333, and 340–378; these read DKDE…LAKS, GHGD…CILI, GHRN…LYVD, VHSNYVDCTRWLGDFILSKSVDNEIVLWEPKTKEQSPG, VPEC…PVLI, and QCKSPIRQTAVSFDGSTILGAGEDGTIWRWDEVDHPSSR.

This sequence belongs to the WD repeat ESC family. In terms of tissue distribution, widely expressed. Expressed in the embryo sac before pollination. After pollination, its expression persists, predominantly in the embryo and at lower levels in the endosperm.

Its subcellular location is the nucleus. In terms of biological role, polycomb group (PcG) protein. PcG proteins act by forming multiprotein complexes, which are required to maintain the transcriptionally repressive state of homeotic genes throughout development. PcG proteins are not required to initiate repression, but to maintain it during later stages of development. They probably act via the methylation of histones, rendering chromatin heritably changed in its expressibility. In Zea mays (Maize), this protein is Polycomb group protein FIE2 (FIE2).